A 169-amino-acid chain; its full sequence is Large ribosomal subunit protein uL10 (169 aa).

The protein belongs to the universal ribosomal protein uL10 family. In terms of assembly, part of the ribosomal stalk of the 50S ribosomal subunit. The N-terminus interacts with L11 and the large rRNA to form the base of the stalk. The C-terminus forms an elongated spine to which L12 dimers bind in a sequential fashion forming a multimeric L10(L12)X complex.

Forms part of the ribosomal stalk, playing a central role in the interaction of the ribosome with GTP-bound translation factors. This chain is Large ribosomal subunit protein uL10, found in Orientia tsutsugamushi (strain Ikeda) (Rickettsia tsutsugamushi).